The following is a 474-amino-acid chain: tRNA-2-methylthio-N(6)-dimethylallyladenosine synthase (474 aa).

In terms of domain architecture, MTTase N-terminal spans 3–120; it reads KKLHIKTWGC…LPDMIEQVRR (118 aa). [4Fe-4S] cluster contacts are provided by cysteine 12, cysteine 49, cysteine 83, cysteine 157, cysteine 161, and cysteine 164. The Radical SAM core domain maps to 143–375; that stretch reads RAEGPTAFVS…QDRITQQAMR (233 aa). The region spanning 378–441 is the TRAM domain; it reads RHMMGTVQRI…TNSLRGKFIR (64 aa).

It belongs to the methylthiotransferase family. MiaB subfamily. Monomer. [4Fe-4S] cluster is required as a cofactor.

It localises to the cytoplasm. The catalysed reaction is N(6)-dimethylallyladenosine(37) in tRNA + (sulfur carrier)-SH + AH2 + 2 S-adenosyl-L-methionine = 2-methylsulfanyl-N(6)-dimethylallyladenosine(37) in tRNA + (sulfur carrier)-H + 5'-deoxyadenosine + L-methionine + A + S-adenosyl-L-homocysteine + 2 H(+). Its function is as follows. Catalyzes the methylthiolation of N6-(dimethylallyl)adenosine (i(6)A), leading to the formation of 2-methylthio-N6-(dimethylallyl)adenosine (ms(2)i(6)A) at position 37 in tRNAs that read codons beginning with uridine. The chain is tRNA-2-methylthio-N(6)-dimethylallyladenosine synthase from Shewanella sp. (strain W3-18-1).